A 548-amino-acid polypeptide reads, in one-letter code: MDEQIVSASSNVKDGVEKQPVKDREDVDANVVPPHSTPSLPKISLISLFSIVMSLGAAAFLGALDATVVAVLTPTLAQEFHSVDAVAWYGAIYLLMSGTTQPLFGKLYNEFSPKWLFITCLIVLQLGSLVCALARNSPTFIVGRAVAGIGAGGILSGALNIVALIVPLHHRAAFTGMIGALECVALIIGPIIGGAIADNIGWRWCFWINLPIGAAVCAILLFFFHPPRSTYSASGVPRSYSEILGNLDYIGAGMIISSLVCLSLALQWGGTKYKWGDGRVVALLVVFGVLFLSASGHQYWKGEKALFPTRLLRQRGFLLSLFNGLCFGGVQYAALYYLPTWFQAIKGETRVGAGIQMLPIVGAIIGVNIVAGITISFTGRLAPFIVIATVLASVGSGLLYTFTPTKSQARIIGYQLIYGAGSGAGVQQAFIGAQAALDPADVTYASASVLLMNSMSGVITLCVCQNLFTNRINALTEVLPGVTKETLQSGFAFLRSTLTPAEFGVAIQTFNSAIQDAFLVAIVLSCASVLGWPFLSWASVKGQKKMNK.

Residues 1–12 (MDEQIVSASSNV) are compositionally biased toward polar residues. Positions 1–33 (MDEQIVSASSNVKDGVEKQPVKDREDVDANVVP) are disordered. A compositionally biased stretch (basic and acidic residues) spans 14–27 (DGVEKQPVKDREDV). The next 14 helical transmembrane spans lie at 43 to 63 (ISLISLFSIVMSLGAAAFLGA), 85 to 105 (AVAWYGAIYLLMSGTTQPLFG), 114 to 134 (KWLFITCLIVLQLGSLVCALA), 146 to 166 (VAGIGAGGILSGALNIVALIV), 177 to 197 (MIGALECVALIIGPIIGGAIA), 204 to 224 (WCFWINLPIGAAVCAILLFFF), 250 to 270 (IGAGMIISSLVCLSLALQWGG), 280 to 300 (VVALLVVFGVLFLSASGHQYW), 316 to 336 (GFLLSLFNGLCFGGVQYAALY), 357 to 377 (MLPIVGAIIGVNIVAGITISF), 382 to 402 (APFIVIATVLASVGSGLLYTF), 411 to 431 (IIGYQLIYGAGSGAGVQQAFI), 444 to 464 (YASASVLLMNSMSGVITLCVC), and 518 to 538 (FLVAIVLSCASVLGWPFLSWA).

It belongs to the major facilitator superfamily. TCR/Tet family.

The protein localises to the membrane. In terms of biological role, MFS-type transporter; part of the diffuse TOX2 gene cluster that mediates the biosynthesis of the HC-toxin, cyclic tetrapeptide of structure cyclo(D-Pro-L-Ala-D-Ala-L-Aeo), where Aeo stands for 2-amino-9,10-epoxi-8-oxodecanoic acid. HC-toxin is a determinant of specificity and virulence in the interaction between the producing fungus and its host, maize. TOXA acts as a HC-toxin efflux pump which contributes to self-protection against HC-toxin and/or the secretion of HC-toxin into the extracellular milieu. This is MFS-type transporter TOXA from Cochliobolus carbonum (Maize leaf spot fungus).